Consider the following 380-residue polypeptide: Cytochrome b (380 aa).

The next 4 helical transmembrane spans lie at 34-54 (FGSL…FLAM), 78-99 (WLLR…YMHI), 114-134 (WNIG…GYVL), and 179-199 (FFAF…VHLL). Positions 84 and 98 each coordinate heme b. Heme b contacts are provided by His-183 and His-197. His-202 is an a ubiquinone binding site. 4 helical membrane-spanning segments follow: residues 227–247 (YKDV…ALFS), 289–309 (LGGV…PFVH), 321–341 (LAQV…WLGG), and 348–368 (YIFL…LFIP).

This sequence belongs to the cytochrome b family. The cytochrome bc1 complex contains 3 respiratory subunits (MT-CYB, CYC1 and UQCRFS1), 2 core proteins (UQCRC1 and UQCRC2) and probably 6 low-molecular weight proteins. Heme b serves as cofactor.

Its subcellular location is the mitochondrion inner membrane. In terms of biological role, component of the ubiquinol-cytochrome c reductase complex (complex III or cytochrome b-c1 complex) that is part of the mitochondrial respiratory chain. The b-c1 complex mediates electron transfer from ubiquinol to cytochrome c. Contributes to the generation of a proton gradient across the mitochondrial membrane that is then used for ATP synthesis. This is Cytochrome b (MT-CYB) from Branchiostoma lanceolatum (Common lancelet).